The primary structure comprises 549 residues: Glucose-6-phosphate isomerase (549 aa).

The active-site Proton donor is the Glu-353. Active-site residues include His-384 and Lys-513.

The protein belongs to the GPI family.

The protein resides in the cytoplasm. It carries out the reaction alpha-D-glucose 6-phosphate = beta-D-fructose 6-phosphate. The protein operates within carbohydrate biosynthesis; gluconeogenesis. It participates in carbohydrate degradation; glycolysis; D-glyceraldehyde 3-phosphate and glycerone phosphate from D-glucose: step 2/4. Its function is as follows. Catalyzes the reversible isomerization of glucose-6-phosphate to fructose-6-phosphate. This Brucella ovis (strain ATCC 25840 / 63/290 / NCTC 10512) protein is Glucose-6-phosphate isomerase.